A 363-amino-acid polypeptide reads, in one-letter code: Glutamate 5-kinase (363 aa).

Lysine 3 provides a ligand contact to ATP. Positions 43, 128, and 140 each coordinate substrate. ATP-binding positions include 160–161 and 202–208; these read TD and TGGMRTK. Residues 267-349 enclose the PUA domain; it reads AGAILIDDGA…REIENVLGYS (83 aa).

The protein belongs to the glutamate 5-kinase family.

Its subcellular location is the cytoplasm. The catalysed reaction is L-glutamate + ATP = L-glutamyl 5-phosphate + ADP. It functions in the pathway amino-acid biosynthesis; L-proline biosynthesis; L-glutamate 5-semialdehyde from L-glutamate: step 1/2. Catalyzes the transfer of a phosphate group to glutamate to form L-glutamate 5-phosphate. In Xanthomonas axonopodis pv. citri (strain 306), this protein is Glutamate 5-kinase.